The chain runs to 957 residues: Glycine dehydrogenase (decarboxylating) (957 aa).

Lys-708 is subject to N6-(pyridoxal phosphate)lysine.

The protein belongs to the GcvP family. As to quaternary structure, the glycine cleavage system is composed of four proteins: P, T, L and H. Pyridoxal 5'-phosphate serves as cofactor.

It catalyses the reaction N(6)-[(R)-lipoyl]-L-lysyl-[glycine-cleavage complex H protein] + glycine + H(+) = N(6)-[(R)-S(8)-aminomethyldihydrolipoyl]-L-lysyl-[glycine-cleavage complex H protein] + CO2. The glycine cleavage system catalyzes the degradation of glycine. The P protein binds the alpha-amino group of glycine through its pyridoxal phosphate cofactor; CO(2) is released and the remaining methylamine moiety is then transferred to the lipoamide cofactor of the H protein. This chain is Glycine dehydrogenase (decarboxylating), found in Salmonella typhi.